The sequence spans 156 residues: ATP synthase subunit b (156 aa).

Residues 4–26 (GATFWGPMISFALFVWFTMKYVW) traverse the membrane as a helical segment.

Belongs to the ATPase B chain family. As to quaternary structure, F-type ATPases have 2 components, F(1) - the catalytic core - and F(0) - the membrane proton channel. F(1) has five subunits: alpha(3), beta(3), gamma(1), delta(1), epsilon(1). F(0) has three main subunits: a(1), b(2) and c(10-14). The alpha and beta chains form an alternating ring which encloses part of the gamma chain. F(1) is attached to F(0) by a central stalk formed by the gamma and epsilon chains, while a peripheral stalk is formed by the delta and b chains.

The protein localises to the cell inner membrane. Functionally, f(1)F(0) ATP synthase produces ATP from ADP in the presence of a proton or sodium gradient. F-type ATPases consist of two structural domains, F(1) containing the extramembraneous catalytic core and F(0) containing the membrane proton channel, linked together by a central stalk and a peripheral stalk. During catalysis, ATP synthesis in the catalytic domain of F(1) is coupled via a rotary mechanism of the central stalk subunits to proton translocation. In terms of biological role, component of the F(0) channel, it forms part of the peripheral stalk, linking F(1) to F(0). The chain is ATP synthase subunit b from Alkalilimnicola ehrlichii (strain ATCC BAA-1101 / DSM 17681 / MLHE-1).